The chain runs to 103 residues: Large ribosomal subunit protein bL21 (103 aa).

This sequence belongs to the bacterial ribosomal protein bL21 family. Part of the 50S ribosomal subunit. Contacts protein L20.

In terms of biological role, this protein binds to 23S rRNA in the presence of protein L20. The protein is Large ribosomal subunit protein bL21 of Polaromonas sp. (strain JS666 / ATCC BAA-500).